A 292-amino-acid chain; its full sequence is MGDRPTPVPLPNSEQFYLENDRGEPYLIQVSWPLHWEDKQTGRGPLPIIYIVDGNALFLTATEAAWRRAAASHFAGGGIIVAIGYPLKGKLYDARRRSFDLTPPTACAPVGYGGADVFLDFIENSVRPAVQARFPQVSLAREALYGHSYGGLLALHALFTRPQSFDCYIASSPSIWWNSLCILHEAKAFVETKKVSHDQSPSLMVSWGSWEQHPPRWADELLDHYEARKRTAAELRMADNALDLCAMLHGCSRLHALIKTEYEGEDHTSVMSCSVSRGLTMFFEDWPFHQSG.

Triacetylfusarinine C contacts are provided by arginine 97, serine 148, tyrosine 149, serine 174, tryptophan 176, and histidine 267.

This sequence belongs to the esterase D family.

The protein resides in the cytoplasm. The enzyme catalyses triacetylfusarinine C + 3 H2O = 3 N-acetylfusarinine + Fe(3+). Its function is as follows. Displays specific triacetylfusarinine C (TAFC) esterase activity but does not hydrolyze fusarinine C, which has the same core structure as TAFC. Hydrolysis optimizes but is not essential for TAFC-mediated iron uptake. Both extra- and intracellular siderophores have been shown to be crucial for the virulence. Subsequent to chelation of iron and uptake, FsC and TAFC are hydrolyzed and the iron is transferred to the metabolism or to the intracellular siderophore ferricrocin (FC) for transport and storage of iron. Hydrolyzes both TAFC and DF-TAFC with equal efficiencies, suggesting that its function might not be restricted to the release of iron from the siderophore but might also include the degradation of the iron-free chelator to protect cells. The polypeptide is Siderophore triacetylfusarinine C esterase (Aspergillus fumigatus (strain ATCC MYA-4609 / CBS 101355 / FGSC A1100 / Af293) (Neosartorya fumigata)).